Consider the following 673-residue polypeptide: DNA ligase (673 aa).

NAD(+)-binding positions include 34–38 (DAEYD), 83–84 (SL), and E116. K118 acts as the N6-AMP-lysine intermediate in catalysis. NAD(+) contacts are provided by R139, E176, K293, and K317. 4 residues coordinate Zn(2+): C411, C414, C429, and C435. In terms of domain architecture, BRCT spans 595–673 (NQQNPFFGKT…EDEFLKWVNS (79 aa)).

The protein belongs to the NAD-dependent DNA ligase family. LigA subfamily. Requires Mg(2+) as cofactor. Mn(2+) serves as cofactor.

The catalysed reaction is NAD(+) + (deoxyribonucleotide)n-3'-hydroxyl + 5'-phospho-(deoxyribonucleotide)m = (deoxyribonucleotide)n+m + AMP + beta-nicotinamide D-nucleotide.. In terms of biological role, DNA ligase that catalyzes the formation of phosphodiester linkages between 5'-phosphoryl and 3'-hydroxyl groups in double-stranded DNA using NAD as a coenzyme and as the energy source for the reaction. It is essential for DNA replication and repair of damaged DNA. The chain is DNA ligase from Legionella pneumophila subsp. pneumophila (strain Philadelphia 1 / ATCC 33152 / DSM 7513).